The chain runs to 185 residues: Ribosome-recycling factor (185 aa).

This sequence belongs to the RRF family.

Its subcellular location is the cytoplasm. Responsible for the release of ribosomes from messenger RNA at the termination of protein biosynthesis. May increase the efficiency of translation by recycling ribosomes from one round of translation to another. This chain is Ribosome-recycling factor, found in Shewanella pealeana (strain ATCC 700345 / ANG-SQ1).